Here is a 136-residue protein sequence, read N- to C-terminus: Large-conductance mechanosensitive channel (136 aa).

Transmembrane regions (helical) follow at residues 9-29 (AFAS…GAAF), 32-52 (IVSS…LGGV), 54-74 (FSDL…VVIA), and 79-99 (IQTV…LKAI).

The protein belongs to the MscL family. Homopentamer.

Its subcellular location is the cell inner membrane. Functionally, channel that opens in response to stretch forces in the membrane lipid bilayer. May participate in the regulation of osmotic pressure changes within the cell. This Shewanella oneidensis (strain ATCC 700550 / JCM 31522 / CIP 106686 / LMG 19005 / NCIMB 14063 / MR-1) protein is Large-conductance mechanosensitive channel.